Consider the following 602-residue polypeptide: Myotubularin (602 aa).

The segment covering 1 to 16 (MATSSTPKYNSNSLEN) has biased composition (polar residues). The disordered stretch occupies residues 1 to 33 (MATSSTPKYNSNSLENSVRRSPGDGINHEQNDE). Over residues 17–33 (SVRRSPGDGINHEQNDE) the composition is skewed to basic and acidic residues. In terms of domain architecture, GRAM spans 28–96 (HEQNDEISRL…GVIARIEKMG (69 aa)). Residues 162 to 537 (GWAVYDAMTE…RHLELWVNYY (376 aa)) enclose the Myotubularin phosphatase domain. The a 1,2-diacyl-sn-glycero-3-phospho-(1D-myo-inositol-3,5-bisphosphate) site is built by Asn287, Asn312, and Ile313. The a 1,2-diacyl-sn-glycero-3-phospho-(1D-myo-inositol-3-phosphate) site is built by Asn287, Asn312, and Ile313. The Phosphocysteine intermediate role is filled by Cys374. A 1,2-diacyl-sn-glycero-3-phospho-(1D-myo-inositol-3,5-bisphosphate) contacts are provided by Ser375, Asp376, Gly377, Trp378, Asp379, Arg380, Lys416, and Arg420. A 1,2-diacyl-sn-glycero-3-phospho-(1D-myo-inositol-3-phosphate)-binding residues include Ser375, Asp376, Gly377, Trp378, Asp379, and Arg380. Arg420 contributes to the a 1,2-diacyl-sn-glycero-3-phospho-(1D-myo-inositol-3-phosphate) binding site. The tract at residues 577–602 (NSPKINRSTTSPSSPSQMMPQVQTPF) is disordered. Residues 584–602 (STTSPSSPSQMMPQVQTPF) are compositionally biased toward low complexity.

It belongs to the protein-tyrosine phosphatase family. Non-receptor class myotubularin subfamily.

The protein localises to the cytoplasm. The protein resides in the cell membrane. It localises to the cell projection. Its subcellular location is the filopodium. It is found in the ruffle. The protein localises to the late endosome. The protein resides in the myofibril. It localises to the sarcomere. It catalyses the reaction a 1,2-diacyl-sn-glycero-3-phospho-(1D-myo-inositol-3-phosphate) + H2O = a 1,2-diacyl-sn-glycero-3-phospho-(1D-myo-inositol) + phosphate. The enzyme catalyses a 1,2-diacyl-sn-glycero-3-phospho-(1D-myo-inositol-3,5-bisphosphate) + H2O = a 1,2-diacyl-sn-glycero-3-phospho-(1D-myo-inositol-5-phosphate) + phosphate. It carries out the reaction 1,2-dioctanoyl-sn-glycero-3-phospho-(1-D-myo-inositol-3-phosphate) + H2O = 1,2-dioctanoyl-sn-glycero-3-phospho-(1D-myo-inositol) + phosphate. The catalysed reaction is 1,2-dioctanoyl-sn-glycero-3-phospho-(1D-myo-inositol-3,5-bisphosphate) + H2O = 1,2-dioctanoyl-sn-glycero-3-phospho-(1D-myo-inositol-5-phosphate) + phosphate. It catalyses the reaction 1,2-dihexadecanoyl-sn-glycero-3-phospho-(1D-myo-inositol-3,5-phosphate) + H2O = 1,2-dihexadecanoyl-sn-glycero-3-phospho-(1D-myo-inositol-5-phosphate) + phosphate. Its function is as follows. Lipid phosphatase which dephosphorylates phosphatidylinositol 3-monophosphate (PI3P) and phosphatidylinositol 3,5-bisphosphate (PI(3,5)P2). This is Myotubularin (mtm1) from Xenopus laevis (African clawed frog).